Reading from the N-terminus, the 405-residue chain is Argininosuccinate synthase (405 aa).

ATP contacts are provided by residues Ala-10–Ser-18 and Ala-37. L-citrulline contacts are provided by Tyr-88 and Ser-93. Gly-118 lines the ATP pocket. L-aspartate is bound by residues Thr-120, Asn-124, and Asp-125. Asn-124 contributes to the L-citrulline binding site. Residues Arg-128, Ser-179, Ser-188, Glu-264, and Tyr-276 each coordinate L-citrulline.

This sequence belongs to the argininosuccinate synthase family. Type 1 subfamily. Homotetramer.

It localises to the cytoplasm. The catalysed reaction is L-citrulline + L-aspartate + ATP = 2-(N(omega)-L-arginino)succinate + AMP + diphosphate + H(+). It functions in the pathway amino-acid biosynthesis; L-arginine biosynthesis; L-arginine from L-ornithine and carbamoyl phosphate: step 2/3. This is Argininosuccinate synthase from Pseudomonas putida (strain GB-1).